The sequence spans 164 residues: uncharacterized protein (164 aa).

This is an uncharacterized protein from Escherichia coli (strain K12).